The chain runs to 373 residues: PqqA peptide cyclase (373 aa).

The Radical SAM core domain maps to 7–227 (ILNPVGLLAE…EVYAGVIVID (221 aa)). C21, C25, and C28 together coordinate [4Fe-4S] cluster.

The protein belongs to the radical SAM superfamily. PqqE family. Interacts with PqqD. The interaction is necessary for activity of PqqE. [4Fe-4S] cluster is required as a cofactor.

It carries out the reaction [PQQ precursor protein] + S-adenosyl-L-methionine = E-Y cross-linked-[PQQ precursor protein] + 5'-deoxyadenosine + L-methionine + H(+). It functions in the pathway cofactor biosynthesis; pyrroloquinoline quinone biosynthesis. Its function is as follows. Catalyzes the cross-linking of a glutamate residue and a tyrosine residue in the PqqA protein as part of the biosynthesis of pyrroloquinoline quinone (PQQ). The chain is PqqA peptide cyclase from Methylocella silvestris (strain DSM 15510 / CIP 108128 / LMG 27833 / NCIMB 13906 / BL2).